The primary structure comprises 635 residues: ATP-dependent zinc metalloprotease FtsH (635 aa).

Topologically, residues methionine 1 to arginine 6 are cytoplasmic. Residues serine 7–serine 27 traverse the membrane as a helical segment. Topologically, residues aspartate 28 to threonine 103 are periplasmic. Residues phenylalanine 104–phenylalanine 124 form a helical membrane-spanning segment. Over methionine 125–isoleucine 635 the chain is Cytoplasmic. An ATP-binding site is contributed by glycine 195 to threonine 202. Histidine 417 contacts Zn(2+). Residue glutamate 418 is part of the active site. Histidine 421 and aspartate 495 together coordinate Zn(2+). A disordered region spans residues serine 600 to isoleucine 635. The segment covering lysine 615–isoleucine 635 has biased composition (basic and acidic residues).

This sequence in the central section; belongs to the AAA ATPase family. The protein in the C-terminal section; belongs to the peptidase M41 family. Homohexamer. Zn(2+) serves as cofactor.

Its subcellular location is the cell inner membrane. In terms of biological role, acts as a processive, ATP-dependent zinc metallopeptidase for both cytoplasmic and membrane proteins. Plays a role in the quality control of integral membrane proteins. The chain is ATP-dependent zinc metalloprotease FtsH from Rickettsia felis (strain ATCC VR-1525 / URRWXCal2) (Rickettsia azadi).